The chain runs to 749 residues: Poly(U)-binding-splicing factor rnp-6 (749 aa).

2 consecutive RRM domains span residues 102 to 176 (SRIY…LKVN) and 207 to 285 (FRVY…KCVT). Disordered regions lie at residues 323–388 (AGSS…PDVV) and 457–480 (IEEE…KMKR). The span at 330-354 (PSESGGSRAASPAPRAQSPATPSSS) shows a compositional bias: low complexity. An RRM 3; atypical domain is found at 658 to 739 (NVIVLRNMVT…NTVKAEAYDQ (82 aa)).

This sequence belongs to the RRM half pint family.

The protein resides in the nucleus. Its function is as follows. DNA- and RNA-binding protein, involved in several nuclear processes such as pre-mRNA splicing, apoptosis and transcription regulation. Ensures the correct splicing of genes involved in immunity to promote longevity in response to infection by pathogenic bacteria such as S.aureus. This chain is Poly(U)-binding-splicing factor rnp-6, found in Caenorhabditis elegans.